Reading from the N-terminus, the 131-residue chain is Glycine cleavage system H protein (131 aa).

Residues 24–106 (RVTVGISDHA…YGEGWIFVVE (83 aa)) enclose the Lipoyl-binding domain. Lysine 65 carries the N6-lipoyllysine modification.

This sequence belongs to the GcvH family. The glycine cleavage system is composed of four proteins: P, T, L and H. Requires (R)-lipoate as cofactor.

Functionally, the glycine cleavage system catalyzes the degradation of glycine. The H protein shuttles the methylamine group of glycine from the P protein to the T protein. This chain is Glycine cleavage system H protein, found in Xanthomonas oryzae pv. oryzae (strain MAFF 311018).